The chain runs to 568 residues: Serine/threonine-protein kinase WNK2 (568 aa).

The Protein kinase domain occupies 24–281 (GRYDEILGKG…ALELLQDPFL (258 aa)). ATP-binding positions include 104–107 (TELF) and Lys154. Asp171 acts as the Proton acceptor in catalysis. A disordered region spans residues 453–473 (SSGEKSHHNHHEFDSSEDKSC). Residues 463 to 472 (HEFDSSEDKS) are compositionally biased toward basic and acidic residues.

Belongs to the protein kinase superfamily. Ser/Thr protein kinase family. WNK subfamily. In terms of processing, autophosphorylated.

The enzyme catalyses L-seryl-[protein] + ATP = O-phospho-L-seryl-[protein] + ADP + H(+). The catalysed reaction is L-threonyl-[protein] + ATP = O-phospho-L-threonyl-[protein] + ADP + H(+). Regulates flowering time by modulating the photoperiod pathway. Possesses kinase activity in vitro. The protein is Serine/threonine-protein kinase WNK2 (WNK2) of Arabidopsis thaliana (Mouse-ear cress).